The following is a 424-amino-acid chain: Histidine--tRNA ligase (424 aa).

The protein belongs to the class-II aminoacyl-tRNA synthetase family. In terms of assembly, homodimer.

It is found in the cytoplasm. The enzyme catalyses tRNA(His) + L-histidine + ATP = L-histidyl-tRNA(His) + AMP + diphosphate + H(+). This is Histidine--tRNA ligase from Protochlamydia amoebophila (strain UWE25).